Here is a 399-residue protein sequence, read N- to C-terminus: Phosphoglycerate kinase (399 aa).

Substrate contacts are provided by residues 21–23, arginine 36, 59–62, arginine 120, and arginine 158; these read DFN and HLGR. ATP contacts are provided by residues lysine 209, glycine 297, glutamate 328, and 355-358; that span reads GGDS.

This sequence belongs to the phosphoglycerate kinase family. In terms of assembly, monomer.

It is found in the cytoplasm. It carries out the reaction (2R)-3-phosphoglycerate + ATP = (2R)-3-phospho-glyceroyl phosphate + ADP. Its pathway is carbohydrate degradation; glycolysis; pyruvate from D-glyceraldehyde 3-phosphate: step 2/5. The polypeptide is Phosphoglycerate kinase (Streptococcus thermophilus (strain CNRZ 1066)).